The following is a 419-amino-acid chain: Gamma-glutamyl phosphate reductase (419 aa).

This sequence belongs to the gamma-glutamyl phosphate reductase family.

It is found in the cytoplasm. It carries out the reaction L-glutamate 5-semialdehyde + phosphate + NADP(+) = L-glutamyl 5-phosphate + NADPH + H(+). Its pathway is amino-acid biosynthesis; L-proline biosynthesis; L-glutamate 5-semialdehyde from L-glutamate: step 2/2. Functionally, catalyzes the NADPH-dependent reduction of L-glutamate 5-phosphate into L-glutamate 5-semialdehyde and phosphate. The product spontaneously undergoes cyclization to form 1-pyrroline-5-carboxylate. The protein is Gamma-glutamyl phosphate reductase of Bordetella bronchiseptica (strain ATCC BAA-588 / NCTC 13252 / RB50) (Alcaligenes bronchisepticus).